Here is a 286-residue protein sequence, read N- to C-terminus: Glycine--tRNA ligase alpha subunit (286 aa).

Belongs to the class-II aminoacyl-tRNA synthetase family. Tetramer of two alpha and two beta subunits.

It localises to the cytoplasm. It carries out the reaction tRNA(Gly) + glycine + ATP = glycyl-tRNA(Gly) + AMP + diphosphate. This Thermotoga sp. (strain RQ2) protein is Glycine--tRNA ligase alpha subunit.